The following is a 445-amino-acid chain: MGRLFGTDGVRGLANTELTAELALQVASAAATVLASPGSGGRKTAVVGRDPRASGEMLEAAVVAGLTSAGVDVLNVGVLPTPAVAYLTAALDAALGVMISASHNPMPDNGIKIFAAGGHKLDDEVEDRIEAVAAGTTTRRAPTGAGIGRVRTVPDAAERYLQHLATALPNSLDGLTVVVDCAHGAASGVAPAAYRAAGATVVAINAEPDGLNINENCGSTHLESLQKAVVEHGADLGLAHDGDADRCLAVDAAGSLIDGDAIMTVLALGMRDAGELVDNTLVATVMSNLGLHIAMREAGITLVTTAVGDRYVLEGLRSGGFSLGGEQSGHVVFPAFGTTGDGVLTGLRLMGRMAETGQAIADLASAMTALPQVLVNVRVADKRAVAASPVVLDAVVAAERSLGDNGRVLLRPSGTEQLVRVMVEASDIEVARKLADELAGTVASV.

Ser102 acts as the Phosphoserine intermediate in catalysis. 4 residues coordinate Mg(2+): Ser102, Asp241, Asp243, and Asp245. A Phosphoserine modification is found at Ser102.

Belongs to the phosphohexose mutase family. Requires Mg(2+) as cofactor. Post-translationally, activated by phosphorylation.

It catalyses the reaction alpha-D-glucosamine 1-phosphate = D-glucosamine 6-phosphate. Functionally, catalyzes the conversion of glucosamine-6-phosphate to glucosamine-1-phosphate. In Rhodococcus jostii (strain RHA1), this protein is Phosphoglucosamine mutase.